Consider the following 111-residue polypeptide: Large ribosomal subunit protein uL24 (111 aa).

It belongs to the universal ribosomal protein uL24 family. In terms of assembly, part of the 50S ribosomal subunit.

Functionally, one of two assembly initiator proteins, it binds directly to the 5'-end of the 23S rRNA, where it nucleates assembly of the 50S subunit. One of the proteins that surrounds the polypeptide exit tunnel on the outside of the subunit. This is Large ribosomal subunit protein uL24 from Heliobacterium modesticaldum (strain ATCC 51547 / Ice1).